A 386-amino-acid chain; its full sequence is Hemagglutinin-esterase (386 aa).

The first 11 residues, 1–11 (MLIIFLFFYFC), serve as a signal peptide directing secretion. Positions 1–121 (MLIIFLFFYF…SNDVWLLNKV (121 aa)) are esterase domain 1. Over 12-359 (YGFNEPLNVV…PICVYDFLPI (348 aa)) the chain is Virion surface. Ser-34 functions as the Nucleophile in the catalytic mechanism. Cys-38 and Cys-59 are oxidised to a cystine. 4 N-linked (GlcNAc...) asparagine; by host glycosylation sites follow: Asn-83, Asn-110, Asn-145, and Asn-168. An intrachain disulfide couples Cys-107 to Cys-154. The receptor binding stretch occupies residues 122-236 (RFYRALYSNM…GSYKVSTTAP (115 aa)). 3 cysteine pairs are disulfide-bonded: Cys-180/Cys-246, Cys-188/Cys-219, and Cys-277/Cys-282. The esterase domain 2 stretch occupies residues 237–349 (FLSLPTKALC…RCPTSSIIKH (113 aa)). Asn-286 carries N-linked (GlcNAc...) asparagine; by host glycosylation. Active-site charge relay system residues include Asp-296 and His-299. Cysteines 317 and 341 form a disulfide. An N-linked (GlcNAc...) asparagine; by host glycan is attached at Asn-328. Residues 360–380 (ILQGILLCLALLFVVFLLFLL) form a helical membrane-spanning segment. The Intravirion segment spans residues 381 to 386 (YNDKSH).

This sequence belongs to the influenza type C/coronaviruses hemagglutinin-esterase family. As to quaternary structure, homodimer; disulfide-linked. Forms a complex with the M protein in the pre-Golgi. Associates then with S-M complex to form a ternary complex S-M-HE. Post-translationally, N-glycosylated in the host RER.

It localises to the virion membrane. It is found in the host cell membrane. It carries out the reaction N-acetyl-9-O-acetylneuraminate + H2O = N-acetylneuraminate + acetate + H(+). It catalyses the reaction N-acetyl-4-O-acetylneuraminate + H2O = N-acetylneuraminate + acetate + H(+). Functionally, structural protein that makes short spikes at the surface of the virus. Contains receptor binding and receptor-destroying activities. Mediates de-O-acetylation of N-acetyl-4-O-acetylneuraminic acid, which is probably the receptor determinant recognized by the virus on the surface of erythrocytes and susceptible cells. This receptor-destroying activity is important for virus release as it probably helps preventing self-aggregation and ensures the efficient spread of the progeny virus from cell to cell. May serve as a secondary viral attachment protein for initiating infection, the spike protein being the major one. May become a target for both the humoral and the cellular branches of the immune system. This Homo sapiens (Human) protein is Hemagglutinin-esterase.